The sequence spans 350 residues: m7GpppX diphosphatase (350 aa).

Ser2 carries the post-translational modification N-acetylserine. Ser60 is modified (phosphoserine). Residue Thr66 is modified to Phosphothreonine. Thr66 is subject to Phosphothreonine; by YAK1. Tyr70 carries the post-translational modification Phosphotyrosine. At Thr120 the chain carries Phosphothreonine. Substrate-binding positions include Glu171, Lys196, and 259–270 (HYQPSYYHFHIH). Positions 266–270 (HFHIH) match the Histidine triad motif motif. His268 serves as the catalytic Nucleophile.

This sequence belongs to the HIT family. As to quaternary structure, homodimer. Forms heterodimer with DCS2; the interaction inhibits the DCS1 scavenger decapping activity during post-diauxic growth. Post-translationally, phosphorylated. Phosphorylation occurs upon glucose deprivation.

The protein localises to the cytoplasm. Its subcellular location is the perinuclear region. It localises to the P-body. The catalysed reaction is a 5'-end (N(7)-methyl 5'-triphosphoguanosine)-ribonucleoside in mRNA + H2O = N(7)-methyl-GMP + a 5'-end diphospho-ribonucleoside in mRNA + 2 H(+). The hydrolytic product 7-methylguanosine diphosphate (m7GDP) efficiently inhibits the decapping scavenger activity and acts as a competitive inhibitor in vitro. In terms of biological role, decapping scavenger enzyme that catalyzes the cleavage of a residual cap structure following the degradation of mRNAs by the 3'-&gt;5' exosome-mediated mRNA decay pathway. Hydrolyzes cap analog structures like 7-methylguanosine nucleoside triphosphate (m7GpppG) and tri-methyl guanosine nucleoside triphosphate (m3(2,2,7)GpppG) with up to 10 nucleotide substrates (small capped oligoribonucleotides) and specifically releases 5'-phosphorylated RNA fragments and 7-methylguanosine monophosphate (m7GMP) or tri-methyl guanosine nucleoside monophosphate (m3(2,2,7)GMP), respectively. Does not hydrolyze unmethylated cap analog (GpppG) and shows no decapping activity on intact m7GpppG-capped mRNA molecules longer than 25 nucleotides. Does not hydrolyze 7-methylguanosine diphosphate (m7GDP) and tri-methylguanosine diphosphate (m3(2,2,7)GDP) to (m(7)GMP) and m3(2,2,7)GMP, respectively. May also play a role in the 5'-&gt;3 mRNA decay pathway; m7GDP, the downstream product released by the 5'-&gt;3' mRNA mediated decapping activity, may be also converted by DCS1 to m7GMP. Binds to m7GpppG and strongly to m7GDP. May also regulate the 5'-&gt;3' exoribonucleolytic mRNA decay pathway in a cap-independent manner. Negatively regulates trehalase activity. This is m7GpppX diphosphatase from Saccharomyces cerevisiae (strain ATCC 204508 / S288c) (Baker's yeast).